The primary structure comprises 426 residues: Glucan 1,3-beta-glucosidase (426 aa).

The N-terminal stretch at 1-20 is a signal peptide; sequence MLYPRALLPAAVALASLVLA. The active-site Proton donor is the E208. Cystine bridges form between C290–C416 and C315–C343. E307 functions as the Nucleophile in the catalytic mechanism.

It belongs to the glycosyl hydrolase 5 (cellulase A) family.

Its subcellular location is the secreted. The enzyme catalyses Successive hydrolysis of beta-D-glucose units from the non-reducing ends of (1-&gt;3)-beta-D-glucans, releasing alpha-glucose.. Beta-glucanases participate in the metabolism of beta-glucan, the main structural component of the cell wall. It could also function biosynthetically as a transglycosylase. The sequence is that of Glucan 1,3-beta-glucosidase from Blumeria graminis (Powdery mildew).